The following is a 325-amino-acid chain: Beta-ketoacyl-[acyl-carrier-protein] synthase III (325 aa).

Residues C119 and H252 contribute to the active site. An ACP-binding region spans residues 253–257; sequence QANIR. N282 is a catalytic residue.

The protein belongs to the thiolase-like superfamily. FabH family. As to quaternary structure, homodimer.

It localises to the cytoplasm. The catalysed reaction is malonyl-[ACP] + acetyl-CoA + H(+) = 3-oxobutanoyl-[ACP] + CO2 + CoA. It functions in the pathway lipid metabolism; fatty acid biosynthesis. Functionally, catalyzes the condensation reaction of fatty acid synthesis by the addition to an acyl acceptor of two carbons from malonyl-ACP. Catalyzes the first condensation reaction which initiates fatty acid synthesis and may therefore play a role in governing the total rate of fatty acid production. Possesses both acetoacetyl-ACP synthase and acetyl transacylase activities. Its substrate specificity determines the biosynthesis of branched-chain and/or straight-chain of fatty acids. The protein is Beta-ketoacyl-[acyl-carrier-protein] synthase III of Acidovorax ebreus (strain TPSY) (Diaphorobacter sp. (strain TPSY)).